We begin with the raw amino-acid sequence, 502 residues long: Histidine--tRNA ligase (502 aa).

Belongs to the class-II aminoacyl-tRNA synthetase family. In terms of assembly, homodimer.

Its subcellular location is the cytoplasm. It carries out the reaction tRNA(His) + L-histidine + ATP = L-histidyl-tRNA(His) + AMP + diphosphate + H(+). In Brucella ovis (strain ATCC 25840 / 63/290 / NCTC 10512), this protein is Histidine--tRNA ligase.